A 407-amino-acid chain; its full sequence is Betaine--homocysteine S-methyltransferase 1 (407 aa).

Positions 11 to 314 constitute a Hcy-binding domain; the sequence is KGILERLNSG…YHIRAIAEEL (304 aa). 3 positions are modified to N6-succinyllysine: K40, K93, and K98. C217 contributes to the Zn(2+) binding site. N6-succinyllysine is present on residues K232 and K241. Zn(2+) is bound by residues C299 and C300. S330 bears the Phosphoserine mark. N6-succinyllysine is present on residues K340 and K377.

In terms of assembly, homotetramer. It depends on Zn(2+) as a cofactor.

Its subcellular location is the cytoplasm. It is found in the cytosol. The protein localises to the nucleus. The enzyme catalyses L-homocysteine + glycine betaine = N,N-dimethylglycine + L-methionine. It participates in amine and polyamine degradation; betaine degradation; sarcosine from betaine: step 1/2. It functions in the pathway amino-acid biosynthesis; L-methionine biosynthesis via de novo pathway; L-methionine from L-homocysteine (BhmT route): step 1/1. Involved in the regulation of homocysteine metabolism. Converts betaine and homocysteine to dimethylglycine and methionine, respectively. This reaction is also required for the irreversible oxidation of choline. This Bos taurus (Bovine) protein is Betaine--homocysteine S-methyltransferase 1 (BHMT).